The sequence spans 267 residues: Type III pantothenate kinase (267 aa).

An ATP-binding site is contributed by 6–13 (DSGNSRLK). Substrate is bound by residues Tyr96 and 103–106 (GADR). The active-site Proton acceptor is Asp105. Thr131 serves as a coordination point for ATP. Thr181 is a substrate binding site.

This sequence belongs to the type III pantothenate kinase family. Homodimer. NH4(+) serves as cofactor. The cofactor is K(+).

Its subcellular location is the cytoplasm. The enzyme catalyses (R)-pantothenate + ATP = (R)-4'-phosphopantothenate + ADP + H(+). It functions in the pathway cofactor biosynthesis; coenzyme A biosynthesis; CoA from (R)-pantothenate: step 1/5. Its function is as follows. Catalyzes the phosphorylation of pantothenate (Pan), the first step in CoA biosynthesis. Activates transcription of the pertussis toxin operon in a BvgAS-dependent manner. May interact with the alpha subunit of RNA polymerase. The protein is Type III pantothenate kinase (coaX) of Bordetella pertussis (strain Tohama I / ATCC BAA-589 / NCTC 13251).